The primary structure comprises 282 residues: Undecaprenyl-diphosphatase (282 aa).

The next 6 membrane-spanning stretches (helical) occupy residues 90 to 110, 121 to 141, 165 to 185, 194 to 214, 228 to 248, and 256 to 276; these read YWLG…GLVC, LWVV…AEYV, LALI…LFLG, FGFL…IPDA, QLLV…SWLL, and LYWF…LLAV.

This sequence belongs to the UppP family.

It localises to the cell membrane. The enzyme catalyses di-trans,octa-cis-undecaprenyl diphosphate + H2O = di-trans,octa-cis-undecaprenyl phosphate + phosphate + H(+). Functionally, catalyzes the dephosphorylation of undecaprenyl diphosphate (UPP). Confers resistance to bacitracin. The sequence is that of Undecaprenyl-diphosphatase from Mycobacterium leprae (strain Br4923).